The chain runs to 394 residues: Ornithine aminotransferase 1 (394 aa).

K252 is subject to N6-(pyridoxal phosphate)lysine.

The protein belongs to the class-III pyridoxal-phosphate-dependent aminotransferase family. OAT subfamily. Pyridoxal 5'-phosphate is required as a cofactor.

It localises to the cytoplasm. It catalyses the reaction a 2-oxocarboxylate + L-ornithine = L-glutamate 5-semialdehyde + an L-alpha-amino acid. The protein operates within amino-acid biosynthesis; L-proline biosynthesis; L-glutamate 5-semialdehyde from L-ornithine: step 1/1. Functionally, catalyzes the interconversion of ornithine to glutamate semialdehyde. The sequence is that of Ornithine aminotransferase 1 from Staphylococcus aureus (strain MRSA252).